A 260-amino-acid chain; its full sequence is Ribonuclease PH (260 aa).

Phosphate-binding positions include Arg-88 and 126 to 128 (GTR).

The protein belongs to the RNase PH family. In terms of assembly, homohexameric ring arranged as a trimer of dimers.

It carries out the reaction tRNA(n+1) + phosphate = tRNA(n) + a ribonucleoside 5'-diphosphate. Phosphorolytic 3'-5' exoribonuclease that plays an important role in tRNA 3'-end maturation. Removes nucleotide residues following the 3'-CCA terminus of tRNAs; can also add nucleotides to the ends of RNA molecules by using nucleoside diphosphates as substrates, but this may not be physiologically important. Probably plays a role in initiation of 16S rRNA degradation (leading to ribosome degradation) during starvation. The protein is Ribonuclease PH of Mycolicibacterium gilvum (strain PYR-GCK) (Mycobacterium gilvum (strain PYR-GCK)).